The sequence spans 188 residues: 3-hydroxyanthranilate 3,4-dioxygenase 2 (188 aa).

R46 contributes to the O2 binding site. Fe cation-binding residues include H50, E70, and H108. E70 contacts substrate. R112 and E122 together coordinate substrate.

This sequence belongs to the 3-HAO family. Requires Fe(2+) as cofactor.

It localises to the cytoplasm. The catalysed reaction is 3-hydroxyanthranilate + O2 = (2Z,4Z)-2-amino-3-carboxymuconate 6-semialdehyde. It participates in cofactor biosynthesis; NAD(+) biosynthesis; quinolinate from L-kynurenine: step 3/3. Catalyzes the oxidative ring opening of 3-hydroxyanthranilate to 2-amino-3-carboxymuconate semialdehyde, which spontaneously cyclizes to quinolinate. This is 3-hydroxyanthranilate 3,4-dioxygenase 2 (bna1-2) from Aspergillus fumigatus (strain CBS 144.89 / FGSC A1163 / CEA10) (Neosartorya fumigata).